A 383-amino-acid chain; its full sequence is UDP-N-acetylenolpyruvoylglucosamine reductase (383 aa).

Over residues M1–G13 the composition is skewed to basic and acidic residues. The tract at residues M1 to P26 is disordered. The FAD-binding PCMH-type domain occupies L49–A215. The active site involves R192. The active-site Proton donor is S271. E375 is a catalytic residue.

The protein belongs to the MurB family. FAD serves as cofactor.

It localises to the cytoplasm. The enzyme catalyses UDP-N-acetyl-alpha-D-muramate + NADP(+) = UDP-N-acetyl-3-O-(1-carboxyvinyl)-alpha-D-glucosamine + NADPH + H(+). It functions in the pathway cell wall biogenesis; peptidoglycan biosynthesis. Cell wall formation. This Streptomyces coelicolor (strain ATCC BAA-471 / A3(2) / M145) protein is UDP-N-acetylenolpyruvoylglucosamine reductase.